Consider the following 315-residue polypeptide: Mitochondrial glutamate carrier 2 (315 aa).

3 Solcar repeats span residues 6 to 92 (LSIT…FRRL), 100 to 210 (RNLK…LNNL), and 219 to 308 (ASFA…GIGE). 3 consecutive transmembrane segments (helical) span residues 12–32 (LING…IDLA), 61–81 (FFGM…EKAI), and 106–126 (MLAG…MEML). The tract at residues 141–160 (QGSASAPSTSRSYTTGSAST) is disordered. Residues 142-159 (GSASAPSTSRSYTTGSAS) show a composition bias toward polar residues. The residue at position 145 (serine 145) is a Phosphoserine. Helical transmembrane passes span 185–205 (GLGA…PLFA), 225–245 (FVSG…LDVL), and 288–308 (ALVI…GIGE).

This sequence belongs to the mitochondrial carrier (TC 2.A.29) family. In terms of tissue distribution, expressed in brain, to a lesser extent in testis, and poorly in all the other tissues.

The protein localises to the mitochondrion inner membrane. It carries out the reaction L-glutamate(in) + H(+)(in) = L-glutamate(out) + H(+)(out). Functionally, responsible for the transport of glutamate from the cytosol into the mitochondrial matrix with the concomitant import of a proton (symport system). This is Mitochondrial glutamate carrier 2 from Homo sapiens (Human).